Reading from the N-terminus, the 1320-residue chain is Inner centromere protein A (1320 aa).

Disordered regions lie at residues 53-75 (KNSN…NNIS), 426-447 (QEKQ…QPVV), 611-679 (NEPI…VVPP), 701-877 (EEEE…NTAS), and 896-1215 (TKSP…DGDE). Low complexity-rich tracts occupy residues 54 to 75 (NSNY…NNIS), 429 to 447 (QQQQ…QPVV), and 615 to 640 (QQPS…SSSS). Residues 221–444 (QQNQFQEQHK…KQQEKQQQQQ (224 aa)) are a coiled coil. Residues 653 to 668 (TIVTSKPTNKVQPQSL) show a composition bias toward polar residues. The span at 669–679 (NSNINNNVVPP) shows a compositional bias: low complexity. The stretch at 683–855 (AAIANKLKKQ…QKKKTVQTIL (173 aa)) forms a coiled coil. The segment covering 701 to 835 (EEEERLRKKQ…QEKEKQEKQK (135 aa)) has biased composition (basic and acidic residues). Over residues 851–863 (VQTILPTPQTPSR) the composition is skewed to polar residues. Residues 864 to 877 (SANNNYDDAANTAS) are compositionally biased toward low complexity. Composition is skewed to acidic residues over residues 908-926 (DDQD…ENSE) and 934-951 (QDDS…DSDE). Residues 965-977 (NKNKNSNNSNNNN) show a composition bias toward low complexity. Over residues 981–1000 (QSRKDKSIVFDSDSLNRNHN) the composition is skewed to basic and acidic residues. Composition is skewed to low complexity over residues 1026-1040 (SNMK…YSNS) and 1047-1061 (SPPS…SSES). Polar residues predominate over residues 1062 to 1071 (NDCFSPLTPT). Positions 1072–1096 (NNNKINNNKINNNNSNNNSFNNSNS) are enriched in low complexity. The segment covering 1120–1136 (SKTSPFLTIRNTPSPLK) has biased composition (polar residues). Low complexity predominate over residues 1143-1154 (NMSSASSLSSFD). Positions 1155-1170 (SDNDSDYNDNDIDDGE) are enriched in acidic residues. Residues 1175–1187 (PNENFTTPLKNQE) show a composition bias toward polar residues. The span at 1188–1198 (NNNNNNSNNSN) shows a compositional bias: low complexity. Residues 1199–1209 (TQYPIITSPPS) show a composition bias toward polar residues.

It belongs to the INCENP family. Interacts with aurK.

Its subcellular location is the chromosome. It localises to the centromere. The protein localises to the cytoplasm. It is found in the cytoskeleton. The protein resides in the spindle. Its subcellular location is the nucleus. It localises to the cleavage furrow. Functionally, chromosomal passenger protein that seems to be required for chromosome segregation and the onset of cytokinesis during mitosis. Plays a key role in the abscission of daughter cells at the end of cytokinesis and in the establishment or maintenance of a bipolar spindle. This is Inner centromere protein A (icpA) from Dictyostelium discoideum (Social amoeba).